The chain runs to 222 residues: Phosphoribosylformylglycinamidine synthase subunit PurQ (222 aa).

In terms of domain architecture, Glutamine amidotransferase type-1 spans 3-222 (SAVIQLPGLN…LFESVLGRAA (220 aa)). Cysteine 86 (nucleophile) is an active-site residue. Active-site residues include histidine 196 and glutamate 198.

In terms of assembly, part of the FGAM synthase complex composed of 1 PurL, 1 PurQ and 2 PurS subunits.

It localises to the cytoplasm. The catalysed reaction is N(2)-formyl-N(1)-(5-phospho-beta-D-ribosyl)glycinamide + L-glutamine + ATP + H2O = 2-formamido-N(1)-(5-O-phospho-beta-D-ribosyl)acetamidine + L-glutamate + ADP + phosphate + H(+). It catalyses the reaction L-glutamine + H2O = L-glutamate + NH4(+). It participates in purine metabolism; IMP biosynthesis via de novo pathway; 5-amino-1-(5-phospho-D-ribosyl)imidazole from N(2)-formyl-N(1)-(5-phospho-D-ribosyl)glycinamide: step 1/2. Part of the phosphoribosylformylglycinamidine synthase complex involved in the purines biosynthetic pathway. Catalyzes the ATP-dependent conversion of formylglycinamide ribonucleotide (FGAR) and glutamine to yield formylglycinamidine ribonucleotide (FGAM) and glutamate. The FGAM synthase complex is composed of three subunits. PurQ produces an ammonia molecule by converting glutamine to glutamate. PurL transfers the ammonia molecule to FGAR to form FGAM in an ATP-dependent manner. PurS interacts with PurQ and PurL and is thought to assist in the transfer of the ammonia molecule from PurQ to PurL. The sequence is that of Phosphoribosylformylglycinamidine synthase subunit PurQ from Chelativorans sp. (strain BNC1).